The chain runs to 189 residues: NADH-quinone oxidoreductase subunit B (189 aa).

Residues C39, C40, C104, and C135 each coordinate [4Fe-4S] cluster.

It belongs to the complex I 20 kDa subunit family. In terms of assembly, NDH-1 is composed of 14 different subunits. Subunits NuoB, C, D, E, F, and G constitute the peripheral sector of the complex. The cofactor is [4Fe-4S] cluster.

It is found in the cell inner membrane. It catalyses the reaction a quinone + NADH + 5 H(+)(in) = a quinol + NAD(+) + 4 H(+)(out). Functionally, NDH-1 shuttles electrons from NADH, via FMN and iron-sulfur (Fe-S) centers, to quinones in the respiratory chain. The immediate electron acceptor for the enzyme in this species is believed to be a menaquinone. Couples the redox reaction to proton translocation (for every two electrons transferred, four hydrogen ions are translocated across the cytoplasmic membrane), and thus conserves the redox energy in a proton gradient. The polypeptide is NADH-quinone oxidoreductase subunit B (Pelodictyon phaeoclathratiforme (strain DSM 5477 / BU-1)).